The sequence spans 637 residues: DNA damage-binding protein CMR1 (637 aa).

Disordered regions lie at residues 1–91 (MIES…EEEA) and 144–168 (LVDT…TERR). Composition is skewed to basic and acidic residues over residues 8-23 (EQER…RLMK) and 74-91 (AGHE…EEEA). 5 WD repeats span residues 185–226 (VTPK…FASN), 255–295 (HARS…SEEI), 297–321 (AGEE…VYMD), 361–401 (VCEK…SVVK), and 431–470 (KARQ…LFSE). Disordered stretches follow at residues 482–508 (SNKP…LSWL) and 525–549 (KQEQ…PTRI). WD repeat units follow at residues 556 to 598 (GKWL…LRSL) and 602 to 637 (NLVT…SPDP).

Belongs to the WD repeat DDB2/WDR76 family.

DNA-binding protein that binds to both single- and double-stranded DNA. Binds preferentially to UV-damaged DNA. May be involved in DNA-metabolic processes. The sequence is that of DNA damage-binding protein CMR1 from Mycosarcoma maydis (Corn smut fungus).